The following is a 341-amino-acid chain: S-adenosylmethionine:tRNA ribosyltransferase-isomerase (341 aa).

This sequence belongs to the QueA family. In terms of assembly, monomer.

The protein resides in the cytoplasm. It catalyses the reaction 7-aminomethyl-7-carbaguanosine(34) in tRNA + S-adenosyl-L-methionine = epoxyqueuosine(34) in tRNA + adenine + L-methionine + 2 H(+). Its pathway is tRNA modification; tRNA-queuosine biosynthesis. Functionally, transfers and isomerizes the ribose moiety from AdoMet to the 7-aminomethyl group of 7-deazaguanine (preQ1-tRNA) to give epoxyqueuosine (oQ-tRNA). In Clostridium beijerinckii (strain ATCC 51743 / NCIMB 8052) (Clostridium acetobutylicum), this protein is S-adenosylmethionine:tRNA ribosyltransferase-isomerase.